We begin with the raw amino-acid sequence, 343 residues long: Small ribosomal subunit biogenesis GTPase RsgA (343 aa).

Residues 116–275 (RGQLKPVAAN…LIDSPGIREF (160 aa)) form the CP-type G domain. GTP contacts are provided by residues 163–166 (NKAD) and 217–225 (GQSGVGKSS). Cys299, Cys304, His306, and Cys312 together coordinate Zn(2+).

Belongs to the TRAFAC class YlqF/YawG GTPase family. RsgA subfamily. Monomer. Associates with 30S ribosomal subunit, binds 16S rRNA. Zn(2+) is required as a cofactor.

The protein resides in the cytoplasm. In terms of biological role, one of several proteins that assist in the late maturation steps of the functional core of the 30S ribosomal subunit. Helps release RbfA from mature subunits. May play a role in the assembly of ribosomal proteins into the subunit. Circularly permuted GTPase that catalyzes slow GTP hydrolysis, GTPase activity is stimulated by the 30S ribosomal subunit. The polypeptide is Small ribosomal subunit biogenesis GTPase RsgA (Pseudomonas savastanoi pv. phaseolicola (strain 1448A / Race 6) (Pseudomonas syringae pv. phaseolicola (strain 1448A / Race 6))).